The sequence spans 303 residues: N-acetylmuramic acid 6-phosphate etherase (303 aa).

The SIS domain occupies 60 to 223 (ATASLQAGGR…STGVMVKLGK (164 aa)). The active-site Proton donor is Glu-88. Glu-119 is a catalytic residue.

The protein belongs to the GCKR-like family. MurNAc-6-P etherase subfamily. In terms of assembly, homodimer.

The catalysed reaction is N-acetyl-D-muramate 6-phosphate + H2O = N-acetyl-D-glucosamine 6-phosphate + (R)-lactate. It participates in amino-sugar metabolism; 1,6-anhydro-N-acetylmuramate degradation. The protein operates within amino-sugar metabolism; N-acetylmuramate degradation. It functions in the pathway cell wall biogenesis; peptidoglycan recycling. Its function is as follows. Specifically catalyzes the cleavage of the D-lactyl ether substituent of MurNAc 6-phosphate, producing GlcNAc 6-phosphate and D-lactate. Together with AnmK, is also required for the utilization of anhydro-N-acetylmuramic acid (anhMurNAc) either imported from the medium or derived from its own cell wall murein, and thus plays a role in cell wall recycling. This is N-acetylmuramic acid 6-phosphate etherase from Pectobacterium atrosepticum (strain SCRI 1043 / ATCC BAA-672) (Erwinia carotovora subsp. atroseptica).